We begin with the raw amino-acid sequence, 377 residues long: Cytochrome b (377 aa).

4 helical membrane passes run 34–54 (FGFL…FLSM), 78–100 (WLLR…IHIA), 113–133 (TWMT…LGYV), and 179–199 (FFTL…IHLL). His84 and His98 together coordinate heme b. Heme b-binding residues include His183 and His197. Residue His202 coordinates a ubiquinone. 4 consecutive transmembrane segments (helical) span residues 225–245 (FTIK…ILVL), 288–308 (KLGG…LPLY), 323–343 (MLFW…AQAI), and 352–372 (QILT…SVLW).

The protein belongs to the cytochrome b family. In terms of assembly, the main subunits of complex b-c1 are: cytochrome b, cytochrome c1 and the Rieske protein. Heme b serves as cofactor.

The protein localises to the mitochondrion inner membrane. In terms of biological role, component of the ubiquinol-cytochrome c reductase complex (complex III or cytochrome b-c1 complex) that is part of the mitochondrial respiratory chain. The b-c1 complex mediates electron transfer from ubiquinol to cytochrome c. Contributes to the generation of a proton gradient across the mitochondrial membrane that is then used for ATP synthesis. The polypeptide is Cytochrome b (mt:Cyt-b) (Priapulus caudatus (Priapulid worm)).